Consider the following 164-residue polypeptide: UPF0201 protein MA_4659 (164 aa).

The protein belongs to the UPF0201 family.

This Methanosarcina acetivorans (strain ATCC 35395 / DSM 2834 / JCM 12185 / C2A) protein is UPF0201 protein MA_4659.